The following is a 75-amino-acid chain: UPF0352 protein PMI0824 (75 aa).

It belongs to the UPF0352 family.

This Proteus mirabilis (strain HI4320) protein is UPF0352 protein PMI0824.